The following is a 487-amino-acid chain: MPN domain-containing protein (487 aa).

A disordered region spans residues 1-55; the sequence is MAAPESLSPGATAEEAPEEDEDDAEAEDPERGTGSGGRSGSLGGSGGGTAGPGMA. Ala2 is subject to N-acetylalanine. Ser8 is subject to Phosphoserine. The span at 15–28 shows a compositional bias: acidic residues; it reads EAPEEDEDDAEAED. The span at 33–55 shows a compositional bias: gly residues; sequence TGSGGRSGSLGGSGGGTAGPGMA. Residues 61–156 enclose the RAMA domain; it reads TRRAVTLRVL…KYKAAWLRRH (96 aa). DNA-binding residues include Ser113, Ser115, and Trp135. Residues 163–217 form a disordered region; that stretch reads ATADESPTSEGEEEELLLEEEEEDVLAGVSSEDKGHRPPGKGSLEPEATPPGKRM. Phosphoserine is present on residues Ser168 and Ser171. Residues 172–187 show a composition bias toward acidic residues; sequence EGEEEELLLEEEEEDV. Positions 258 to 393 constitute an MPN domain; that stretch reads VAVSSNVLFL…PESKICPFWV (136 aa). Residues His335, His337, and Asp348 each coordinate Zn(2+). The JAMM motif motif lies at 335–348; it reads HSHPHSPAVPSLQD.

The protein belongs to the peptidase M67 family. In terms of assembly, monomer. Mainly monomoric, but when binds to dsDNA, forms homotetramer assembled into two homodimers. May interact with histones; this interaction is facilitated by. Degraded following binding to N(6)-methyladenosine methylated DNA (m6A).

Probable protease. Acts as a sensor of N(6)-methyladenosine methylation on DNA (m6A): recognizes and binds m6A DNA, leading to its degradation. Binds only double strand DNA (dsDNA) in a sequence-independent manner. The chain is MPN domain-containing protein from Mus musculus (Mouse).